Here is a 481-residue protein sequence, read N- to C-terminus: PTS system N-acetylmuramic acid-specific EIIBC component (481 aa).

Residues 1–89 (MAKITQTMMA…NALIESGDNV (89 aa)) form the PTS EIIB type-1 domain. C28 acts as the Phosphocysteine intermediate; for EIIB activity in catalysis. Positions 122 to 481 (SKFATIFTPL…FFGCKDVDLS (360 aa)) constitute a PTS EIIC type-1 domain. The next 10 helical transmembrane spans lie at 124-144 (FATI…LLGI), 165-185 (LVAY…ILIG), 190-210 (QAFG…VLGY), 225-245 (FFGF…AAIL), 263-283 (MILT…LIIM), 307-327 (AAIL…QGFV), 342-362 (LFPI…ALYA), 376-396 (GAII…VTLP), 406-426 (IGGA…LPVG), and 448-468 (IFAG…VGFA).

It localises to the cell inner membrane. It catalyses the reaction N-acetyl-beta-D-muramate(out) + N(pros)-phospho-L-histidyl-[protein] = N-acetyl-beta-D-muramate 6-phosphate(in) + L-histidyl-[protein]. In terms of biological role, the phosphoenolpyruvate-dependent sugar phosphotransferase system (sugar PTS), a major carbohydrate active transport system, catalyzes the phosphorylation of incoming sugar substrates concomitantly with their translocation across the cell membrane. This system is involved in N-acetylmuramic acid (MurNAc) transport, yielding cytoplasmic MurNAc-6-P. Is also able to take up anhydro-N-acetylmuramic acid (anhMurNAc), but cannot phosphorylate the carbon 6, probably because of the 1,6-anhydro ring. This chain is PTS system N-acetylmuramic acid-specific EIIBC component (murP), found in Vibrio cholerae serotype O1 (strain ATCC 39315 / El Tor Inaba N16961).